The following is a 396-amino-acid chain: Phosphoglycerate kinase (396 aa).

Residues 24 to 26 (DFN), Arg-39, 62 to 65 (HLGR), Arg-120, and Arg-153 each bind substrate. ATP-binding positions include Lys-203, Gly-294, Glu-325, and 352 to 355 (GGDS).

The protein belongs to the phosphoglycerate kinase family. As to quaternary structure, monomer.

The protein localises to the cytoplasm. The enzyme catalyses (2R)-3-phosphoglycerate + ATP = (2R)-3-phospho-glyceroyl phosphate + ADP. It functions in the pathway carbohydrate degradation; glycolysis; pyruvate from D-glyceraldehyde 3-phosphate: step 2/5. This chain is Phosphoglycerate kinase, found in Dictyoglomus turgidum (strain DSM 6724 / Z-1310).